Here is a 211-residue protein sequence, read N- to C-terminus: Holliday junction resolvase RecU (211 aa).

Mg(2+) is bound by residues T95, D97, E110, and Q129.

The protein belongs to the RecU family. The cofactor is Mg(2+).

The protein localises to the cytoplasm. It catalyses the reaction Endonucleolytic cleavage at a junction such as a reciprocal single-stranded crossover between two homologous DNA duplexes (Holliday junction).. Endonuclease that resolves Holliday junction intermediates in genetic recombination. Cleaves mobile four-strand junctions by introducing symmetrical nicks in paired strands. Promotes annealing of linear ssDNA with homologous dsDNA. Required for DNA repair, homologous recombination and chromosome segregation. This Lactobacillus acidophilus (strain ATCC 700396 / NCK56 / N2 / NCFM) protein is Holliday junction resolvase RecU.